The following is a 120-amino-acid chain: NAD(P)H-quinone oxidoreductase subunit 3, chloroplastic (120 aa).

The next 3 helical transmembrane spans lie at 2 to 22, 64 to 84, and 88 to 108; these read FLLY…VIPI, MFAL…PWAL, and ILGV…VLGL.

It belongs to the complex I subunit 3 family. As to quaternary structure, NDH is composed of at least 16 different subunits, 5 of which are encoded in the nucleus.

It localises to the plastid. The protein localises to the chloroplast thylakoid membrane. The enzyme catalyses a plastoquinone + NADH + (n+1) H(+)(in) = a plastoquinol + NAD(+) + n H(+)(out). It carries out the reaction a plastoquinone + NADPH + (n+1) H(+)(in) = a plastoquinol + NADP(+) + n H(+)(out). Functionally, NDH shuttles electrons from NAD(P)H:plastoquinone, via FMN and iron-sulfur (Fe-S) centers, to quinones in the photosynthetic chain and possibly in a chloroplast respiratory chain. The immediate electron acceptor for the enzyme in this species is believed to be plastoquinone. Couples the redox reaction to proton translocation, and thus conserves the redox energy in a proton gradient. The chain is NAD(P)H-quinone oxidoreductase subunit 3, chloroplastic from Oenothera biennis (German evening primrose).